Reading from the N-terminus, the 397-residue chain is Phosphoglycerate kinase (397 aa).

Substrate is bound by residues Asp25–Asn27, Arg41, His64–Arg67, Arg118, and Arg151. ATP-binding positions include Lys202, Glu324, and Gly350–Thr353.

It belongs to the phosphoglycerate kinase family. In terms of assembly, monomer.

Its subcellular location is the cytoplasm. It carries out the reaction (2R)-3-phosphoglycerate + ATP = (2R)-3-phospho-glyceroyl phosphate + ADP. Its pathway is carbohydrate degradation; glycolysis; pyruvate from D-glyceraldehyde 3-phosphate: step 2/5. The polypeptide is Phosphoglycerate kinase (Albidiferax ferrireducens (strain ATCC BAA-621 / DSM 15236 / T118) (Rhodoferax ferrireducens)).